Here is a 102-residue protein sequence, read N- to C-terminus: Small ribosomal subunit protein uS10 (102 aa).

It belongs to the universal ribosomal protein uS10 family. In terms of assembly, part of the 30S ribosomal subunit.

Its function is as follows. Involved in the binding of tRNA to the ribosomes. This Finegoldia magna (strain ATCC 29328 / DSM 20472 / WAL 2508) (Peptostreptococcus magnus) protein is Small ribosomal subunit protein uS10.